Reading from the N-terminus, the 74-residue chain is RNA-binding protein Hfq (74 aa).

Positions 9–69 (DQFLNQLRKE…ISTFVPQKNV (61 aa)) constitute a Sm domain.

Belongs to the Hfq family. In terms of assembly, homohexamer.

Functionally, RNA chaperone that binds small regulatory RNA (sRNAs) and mRNAs to facilitate mRNA translational regulation in response to envelope stress, environmental stress and changes in metabolite concentrations. Also binds with high specificity to tRNAs. The sequence is that of RNA-binding protein Hfq from Bacillus cereus (strain Q1).